The sequence spans 756 residues: MSRPGTATPALALVLLAVTLAGVGAQGAALEDPDYYGQEIWSREPYYARPEPELETFSPPLPAGPGEEWERRPQEPRPPKRATKPKKAPKREKSAPEPPPPGKHSNKKVMRTKSSEKAANDDHSVRVAREDVRESCPPLGLETLKITDFQLHASTVKRYGLGAHRGRLNIQAGINENDFYDGAWCAGRNDLQQWIEVDARRLTRFTGVITQGRNSLWLSDWVTSYKVMVSNDSHTWVTVKNGSGDMIFEGNSEKEIPVLNELPVPMVARYIRINPQSWFDNGSICMRMEILGCPLPDPNNYYHRRNEMTTTDDLDFKHHNYKEMRQLMKVVNEMCPNITRIYNIGKSHQGLKLYAVEISDHPGEHEVGEPEFHYIAGAHGNEVLGRELLLLLVQFVCQEYLARNARIVHLVEETRIHVLPSLNPDGYEKAYEGGSELGGWSLGRWTHDGIDINNNFPDLNTLLWEAEDRQNVPRKVPNHYIAIPEWFLSENATVAAETRAVIAWMEKIPFVLGGNLQGGELVVAYPYDLVRSPWKTQEHTPTPDDHVFRWLAYSYASTHRLMTDARRRVCHTEDFQKEEGTVNGASWHTVAGSLNDFSYLHTNCFELSIYVGCDKYPHESQLPEEWENNRESLIVFMEQVHRGIKGLVRDSHGKGIPNAIISVEGINHDIRTANDGDYWRLLNPGEYVVTAKAEGFTASTKNCMVGYDMGATRCDFTLSKTNMARIREIMEKFGKQPVSLPARRLKLRGQKRRQRG.

An N-terminal signal peptide occupies residues 1 to 25 (MSRPGTATPALALVLLAVTLAGVGA). The interval 51 to 131 (EPELETFSPP…DHSVRVARED (81 aa)) is disordered. The segment covering 68 to 78 (EWERRPQEPRP) has biased composition (basic and acidic residues). Over residues 79–90 (PKRATKPKKAPK) the composition is skewed to basic residues. Positions 113–131 (KSSEKAANDDHSVRVARED) are enriched in basic and acidic residues. The region spanning 134–293 (ESCPPLGLET…ICMRMEILGC (160 aa)) is the F5/8 type C domain. An intrachain disulfide couples Cys-136 to Cys-293. Asn-231, Asn-241, Asn-281, Asn-337, and Asn-491 each carry an N-linked (GlcNAc...) asparagine glycan. Residues 317-640 (KHHNYKEMRQ…ESLIVFMEQV (324 aa)) enclose the Peptidase M14 domain.

This sequence belongs to the peptidase M14 family.

It is found in the secreted. May be involved in cell-cell interactions. In Homo sapiens (Human), this protein is Inactive carboxypeptidase-like protein X2 (CPXM2).